A 202-amino-acid chain; its full sequence is Large ribosomal subunit protein bL25 (202 aa).

The tract at residues 182-202 (EVEAEETEDDEAASEGEEAAE) is disordered. A compositionally biased stretch (acidic residues) spans 183-202 (VEAEETEDDEAASEGEEAAE).

Belongs to the bacterial ribosomal protein bL25 family. CTC subfamily. Part of the 50S ribosomal subunit; part of the 5S rRNA/L5/L18/L25 subcomplex. Contacts the 5S rRNA. Binds to the 5S rRNA independently of L5 and L18.

This is one of the proteins that binds to the 5S RNA in the ribosome where it forms part of the central protuberance. This chain is Large ribosomal subunit protein bL25, found in Corynebacterium glutamicum (strain R).